Here is an 805-residue protein sequence, read N- to C-terminus: Leucine--tRNA ligase (805 aa).

Residues 40-51 (PYPSGSGLHVGH) carry the 'HIGH' region motif. The 'KMSKS' region motif lies at 576 to 580 (KMSKS). Residue Lys-579 coordinates ATP.

The protein belongs to the class-I aminoacyl-tRNA synthetase family.

Its subcellular location is the cytoplasm. It carries out the reaction tRNA(Leu) + L-leucine + ATP = L-leucyl-tRNA(Leu) + AMP + diphosphate. The sequence is that of Leucine--tRNA ligase from Chlorobium phaeovibrioides (strain DSM 265 / 1930) (Prosthecochloris vibrioformis (strain DSM 265)).